A 560-amino-acid polypeptide reads, in one-letter code: Vanillyl-alcohol oxidase (560 aa).

An FAD-binding PCMH-type domain is found at 67–272 (DYFLASAIVA…TKIGIWLMPN (206 aa)). Residue Tyr-108 is part of the active site. His-422 is modified (tele-8alpha-FAD histidine). Residues Tyr-503 and Arg-504 contribute to the active site.

The protein to bacterial flavocytochrome p-cresol methyl hydroxylase. As to quaternary structure, homooctamer (tetramer of tightly interacting dimers). The cofactor is FAD.

The protein localises to the peroxisome. Its subcellular location is the cytoplasm. The enzyme catalyses 4-hydroxy-3-methoxy-benzenemethanol + O2 = vanillin + H2O2. Its activity is regulated as follows. Competitively inhibited by cinnamyl and coniferyl alcohols and by isoeugenol. Catalyzes the conversion of vanillin alcohol to vanillin, and also the conversion of a wide range of phenolic compounds bearing side chains of variable size at the para position of the aromatic ring. Crucial for the degradation of the secondary metabolites derived from the degradation of the lignin. Catalyzes besides the oxidation of 4-hydroxybenzyl alcohols, the oxidative deamination of 4-hydroxybenzylamines, the oxidative demethylation of 4-(methoxy-methyl)phenols and the oxidative hydration of 4-allylphenols. Most active with 4-allylphenols. This is Vanillyl-alcohol oxidase (VAOA) from Penicillium simplicissimum.